We begin with the raw amino-acid sequence, 87 residues long: uncharacterized protein (87 aa).

The helical transmembrane segment at 29 to 49 threads the bilayer; it reads ILWMIIFVVIIAVIIYILISP.

It is found in the membrane. This is an uncharacterized protein from Methanocaldococcus jannaschii (strain ATCC 43067 / DSM 2661 / JAL-1 / JCM 10045 / NBRC 100440) (Methanococcus jannaschii).